The chain runs to 243 residues: MVMNPTSFEQQQTEKLLNPMGRSQVTQDLSENVILTTVDDLYNWARLSSLWPLLYGTACCFIEFAALLGSRFDFDRFGLVPRSSPRQADLILVAGTVTMKMAPALVRLYEEMPEPKYVIAMGACTITGGMFSSDSTTAVRGVDKLIPVDLYIPGCPPRPEAIIDAIIKLRKKVSNETIQERSLKTEQTHRYYSTAHSMKVVEPILTGKYLGMDTWNNPPKELTEAMGMPVPPALLTAKQREEA.

Residues C59, C60, C124, and C155 each contribute to the [4Fe-4S] cluster site.

Belongs to the complex I 20 kDa subunit family. NDH-1 can be composed of about 15 different subunits; different subcomplexes with different compositions have been identified which probably have different functions. Requires [4Fe-4S] cluster as cofactor.

The protein localises to the cellular thylakoid membrane. The catalysed reaction is a plastoquinone + NADH + (n+1) H(+)(in) = a plastoquinol + NAD(+) + n H(+)(out). It catalyses the reaction a plastoquinone + NADPH + (n+1) H(+)(in) = a plastoquinol + NADP(+) + n H(+)(out). Functionally, NDH-1 shuttles electrons from an unknown electron donor, via FMN and iron-sulfur (Fe-S) centers, to quinones in the respiratory and/or the photosynthetic chain. The immediate electron acceptor for the enzyme in this species is believed to be plastoquinone. Couples the redox reaction to proton translocation, and thus conserves the redox energy in a proton gradient. Cyanobacterial NDH-1 also plays a role in inorganic carbon-concentration. This chain is NAD(P)H-quinone oxidoreductase subunit K, found in Picosynechococcus sp. (strain ATCC 27264 / PCC 7002 / PR-6) (Agmenellum quadruplicatum).